A 2381-amino-acid chain; its full sequence is MNGDMPHVPITTLAGIAGLTDLLNQLPLPSPLPGTTTKSLLYNGRVAEDVGHLLGCRDETLVSQLANSLSQVSTEHIELKDSLGSDELEGDVPVLLQLLMSRNPNIFRNKTAPNTPQYPAQAGISQQSMAPPYKITHGSMQGSPASANYQQASMSHSPSGHFVPGQSGPGGRFLPQQGSPVPSPYAPQSPATGYRQYPHPPAYSQHQHLQQGSVASPMIPGAMRNVHENKDQMRMGFTSHLLQSSPPYTPPCDGTKDLHLGSQDKQRGQKSSEGEQDSPDKATVYDIVGSPAKDHTKLILRPSRARPAEVELGGMYPGSDPEGELVEALAAIERMESEAAMETERSAKEVQDKDKPLKKRKQDSHPQEPGAAGTAGSGSGAPGGGGGANAGHRLAPQEASAAGTSASRPGLQVSLEQAGRVEDDCMGMPIPASEAQRWPQEPQEGVTPKAVKHEHDHDPEHPHYDDKQPDTPRQKHRPEGRHGDGGAQRAAVQSGSKQVELPPYMLGENTGVLKNFTIPKIRKGELGGGDIPEGWKQPCVRLERLEADVDVKKSVKPVVVLQKLSIDEVQRLMRERDSRASKSGKNRLSSGRSGKGGIDPSVLKDLPPELLAEIESTMPLCERVKMNKRKRSTVNERPKYAEDSSEDEEFSSRKRQRKDRDRTWEAEERDRRSSGEHRRGNFDARRGSGSRYDDSDQDSPPPSLNEVARRLKMKQKKRKVYEPKLTPEEMMDSSTFKRFTLSIDNILENLEDVDFTAQDDDEIPQELLLGKQQLNELGSESAKIKAMGITSRIPSDKLVKLLNILEKNILDGASLSTLMNLDNEGEDEERLWRDLIMERVTKSADACLTALNIMTSTHMPKAVYIEDVIERVLQYTKFHLQNTLYPQYDPVYRVNPKGGSMLSSRAKRAKCSTAKQKVIIMLYNKVCDVVSNISELLEIQLMTDTTILQVSSMGITPFFVENVSELQLCAIKLVTAVFSRYEKHRQLILEEIFTSLARLPTSKRSLRNFRLNSSDDEGEPIYIQMVSALVLQLIQCVVHLPADRDSEDDHKKVDDDVFITNSYETARRTAQNFLSVFLKKCGSKQGEEDYRPLFENFVQDLLSTVNKPDWPASELLLSLLGRLLVHQFSNKQTEMALRVASLDYLGTVAARLRKDSVTSRMDQKAIERIIRENTEGDETQRLQKALLDYMDENAETDPALAFARKFYIAQWFRDCTTETEKAMRSQNQKEDDSDGAQHAKELQATGDIMQRAETRKKFLHSVVKSTPNQFTTLRMNSDTVDYDDACLIVRYLASTRPFSQSFDIYLTQILRVLGESAIAVRTKAMKCLSEVVAVDPSILARSDMQRGVHGRLMDNSTSVREAAVELLGRFVLSRPQLTEQYYDMLIERILDTGISVRKRVIKILRDICLEQPNFSKITEMCVKMIRRVNDEEGIKKLVNETFQKLWFTPTPNHDKETMNRKILNITDVVSACKDTGYDWFEQLLQNLLKSEEDSSYKPTRKACVQLVDNLVEHILKYEEALAEHKSVNSTRLVACITTLYLFSKIRAQLMVKHAMTMQPYLTTKCSSQSDFMVICNVAKILELVVPLMDHPSESFLTTIEEDLMKLILKYGMTVVQYCVSCLGAIVNKVTHNYKFVWACFNRYYGALTKLKVQHQEGTNSMALAATKAALLRSLFTAGALCRHFDFDLEQFKGTTKVVIKEKVLELLLYFTNHEDEEVKCKAIIGLGFLFIMHPSQMFVPEVKTLYNGLLSDKRSSITLKIQVLKNLQMYLQEEDTRMQEADREWQKLSKQEDLKEMGDISSGMSSSIMQLYLKQVLESFFHAQSSVRHFALNVIALTLSQGLIHPVQCVPYLIAMGTDAEPTMRNKADQQLVEIDKKYTGFIHMKAVAGMKMSYQVQQAVFGSAGSVIRGFRQDESNSAQCSHLYSMVRANRQHRRAFLISLLNLFDDSSKMEVNMLLFIADNLAYFPYQSQEEPLFIMHHIDITLSVSGSNLLQTFKESLVKIPGRKSRKRRRRRRRPQRQQPPPPPPQQQQQQNGSEEERGAQDEERERHSGDEEYDDDDYEEDEDGHRVRKPKPTEDIRQSESDSDSDLDDVDAVMERLPDDSTSLVDFARASQGILLLLVLKQHLKNLYGFSDGKIQKYSPSESAKVYDKAVNRKTLANFNPQQTIDFLRHHDVHGELTYELKRKIVKQFLDFKLLMEHLDPDEEDEDGDTSANVRNKAITALLGGAAASPRNHHTGDSEEDDERSEGEERTPGASRRGRRTGDSADLLSANMNESVSALDIIAIHCPKYRDRPQIARVIQKNSDGYSIHWMAGSYSSTWAEAKKRDGRKLVPWVDSIKETDIIYKKITLTSGNKLNHKVAQTLRSLYAAKDRNSS.

An HEAT 1 repeat occupies 85–124 (SDELEGDVPVLLQLLMSRNPNIFRNKTAPNTPQYPAQAGI). Disordered regions lie at residues 131–211 (PPYK…HLQQ), 240–289 (HLLQ…DIVG), and 329–503 (LAAI…ELPP). Polar residues predominate over residues 138–158 (GSMQGSPASANYQQASMSHSP). Composition is skewed to basic and acidic residues over residues 254–273 (GTKDLHLGSQDKQRGQKSSE) and 333–355 (ERMESEAAMETERSAKEVQDKDK). Residues 373-389 (GTAGSGSGAPGGGGGAN) are compositionally biased toward gly residues. The span at 451-473 (VKHEHDHDPEHPHYDDKQPDTPR) shows a compositional bias: basic and acidic residues. Positions 552-565 (KKSVKPVVVLQKLS) match the PxVxL motif motif. The segment covering 570-580 (QRLMRERDSRA) has biased composition (basic and acidic residues). 2 disordered regions span residues 570-604 (QRLMRERDSRASKSGKNRLSSGRSGKGGIDPSVLK) and 629-708 (RKRS…NEVA). The span at 581 to 592 (SKSGKNRLSSGR) shows a compositional bias: polar residues. Composition is skewed to basic and acidic residues over residues 633 to 642 (TVNERPKYAE) and 658 to 694 (KDRDRTWEAEERDRRSSGEHRRGNFDARRGSGSRYDD). 4 HEAT repeats span residues 1299–1337 (SQSFDIYLTQILRVLGESAIAVRTKAMKCLSEVVAVDPS), 1375–1413 (PQLTEQYYDMLIERILDTGISVRKRVIKILRDICLEQPN), 1477–1516 (YDWFEQLLQNLLKSEEDSSYKPTRKACVQLVDNLVEHILK), and 1843–1881 (LIHPVQCVPYLIAMGTDAEPTMRNKADQQLVEIDKKYTG). 2 disordered regions span residues 2005–2095 (IPGR…DLDD) and 2228–2271 (LLGG…GDSA). Residues 2006 to 2021 (PGRKSRKRRRRRRRPQ) show a composition bias toward basic residues. Positions 2040–2056 (EEERGAQDEERERHSGD) are enriched in basic and acidic residues. Residues 2057-2068 (EEYDDDDYEEDE) are compositionally biased toward acidic residues. Basic and acidic residues predominate over residues 2077-2086 (KPTEDIRQSE).

It belongs to the SCC2/Nipped-B family.

Its subcellular location is the nucleus. In terms of biological role, may play a structural role in chromatin. Involved in sister chromatid cohesion, possibly by facilitating the cohesin complex loading. Transcription factor, which may promote cortical neuron migration during brain development by regulating the transcription of crucial genes in this process. The polypeptide is Nipped-B-like protein A (nipbla) (Danio rerio (Zebrafish)).